The chain runs to 77 residues: Teretoxin Tan15.2 (77 aa).

A signal peptide spans 1-21 (MTRLTVVFLAILVLLPLATSN). Positions 22-40 (SGADEAPASLSDLLHRTKR) are excised as a propeptide.

Contains 4 disulfide bonds. In terms of tissue distribution, expressed by the venom duct.

It localises to the secreted. In Terebra anilis (Auger snail), this protein is Teretoxin Tan15.2.